We begin with the raw amino-acid sequence, 150 residues long: Transcription antitermination protein NusB (150 aa).

This sequence belongs to the NusB family.

In terms of biological role, involved in transcription antitermination. Required for transcription of ribosomal RNA (rRNA) genes. Binds specifically to the boxA antiterminator sequence of the ribosomal RNA (rrn) operons. The sequence is that of Transcription antitermination protein NusB from Streptococcus pyogenes serotype M1.